Consider the following 737-residue polypeptide: Disintegrin and metalloproteinase domain-containing protein 2 (737 aa).

A signal peptide spans 1-18 (MWLLLLLLSGLSRLGGLS). Residues 19-180 (EPQTEGTREK…YKIRSIKPQR (162 aa)) constitute a propeptide that is removed on maturation. Residues 19 to 688 (EPQTEGTREK…ASAYRSKSAR (670 aa)) are Extracellular-facing. N-linked (GlcNAc...) asparagine glycosylation is found at N128 and N226. Positions 184–381 (HYLEIHIVVE…QSSHCLQNQP (198 aa)) constitute a Peptidase M12B domain. 4 disulfides stabilise this stretch: C293/C376, C335/C360, C337/C342, and C450/C470. N-linked (GlcNAc...) asparagine glycans are attached at residues N359, N464, N491, and N571. In terms of domain architecture, Disintegrin spans 389 to 478 (MAVCGNGELE…VCEEDFFVQD (90 aa)). Positions 617–650 (LNYDCTPEKCNHHGVCNNKKHCHCEPTYLPPDCK) constitute an EGF-like domain. 3 disulfide bridges follow: C621-C632, C626-C638, and C640-C649. The chain crosses the membrane as a helical span at residues 689-709 (WPFFLIIPFYVVILVLIGMLV). Over 710 to 737 (KVYSQRKKWRMDDFSSEEQFESESESKD) the chain is Cytoplasmic. S731 bears the Phosphoserine mark.

Heterodimer with ADAM1/fertilin subunit alpha. Post-translationally, the prodomain and the metalloprotease domain are cleaved during the epididymal maturation of the spermatozoa.

The protein localises to the membrane. Functionally, sperm surface membrane protein that may be involved in sperm-egg plasma membrane adhesion and fusion during fertilization. Could have a direct role in sperm-zona binding or migration of sperm from the uterus into the oviduct. Interactions with egg membrane could be mediated via binding between its disintegrin-like domain to one or more integrins receptors on the egg. This is a non catalytic metalloprotease-like protein. This is Disintegrin and metalloproteinase domain-containing protein 2 (Adam2) from Rattus norvegicus (Rat).